Reading from the N-terminus, the 786-residue chain is Rho GTPase-activating protein 10 (786 aa).

The BAR domain occupies 7-262 (EFSDCYLDSP…IRQNPKDQKR (256 aa)). The PH domain occupies 265-372 (QFTAEGYLYV…WLEALGGKEA (108 aa)). Residues 389 to 574 (AQLDKMGFTI…ILIENHEKIF (186 aa)) enclose the Rho-GAP domain. Disordered regions lie at residues 584-609 (EPTC…RTKR) and 622-714 (EGDS…PFPL). The segment covering 599–609 (QSKRQGQRTKR) has biased composition (basic residues). A compositionally biased stretch (low complexity) spans 634–649 (PSSSQDSLSTPSPTTS). Residues 673-701 (TATTPSQTRPSMVQWLNMQSPTTPSSNPA) are compositionally biased toward polar residues. Pro residues predominate over residues 702 to 714 (GTPPSPRMSPFPL). In terms of domain architecture, SH3 spans 728–786 (VINRKARAVYPCEAEHSSELSFEIGAIFEDVQTSREPGWLEGTLNGKRGLIPQNYVKLL).

Interacts with PKN3. Interacts with caspase-activated PAK2 proteolytic fragment PAK-2p34; the interaction does not affect ARHGAP10 GTPase activation activity towards RHOA and CDC42. Interacts via its SH3 domain with PTK2/FAK1. Interacts with PTK2B/PYK2; the interaction negatively regulates ARHGAP10 GTPase-activating activity. Interacts with MICAL1 and WDR44; complex formation might transit from GRAF2/ARHGAP10-MICAL1 to GRAF2/ARHGAP10-WDR44 complexes. In terms of processing, phosphorylated on tyrosine residues, probably involving PTK2B/PYK2. In terms of tissue distribution, high levels of expression in brain, testes, liver, heart and kidney.

It localises to the cytoplasm. The protein resides in the perinuclear region. Its subcellular location is the cell membrane. The protein localises to the endosome membrane. In terms of biological role, GTPase-activating protein that catalyzes the conversion of active GTP-bound Rho GTPases to their inactive GDP-bound form, thus suppressing various Rho GTPase-mediated cellular processes. Also converts Cdc42 to an inactive GDP-bound state. Essential for PTKB2 regulation of cytoskeletal organization via Rho family GTPases. Inhibits PAK2 proteolytic fragment PAK-2p34 kinase activity and changes its localization from the nucleus to the perinuclear region. Stabilizes PAK-2p34 thereby increasing stimulation of cell death. Associates with MICAL1 on the endosomal membrane to promote Rab8-Rab10-dependent tubule extension. After dissociation with MICAL1, recruits WDR44 which connects the endoplasmic reticulum (ER) with the endosomal tubule, thereby participating in the export of a subset of neosynthesized proteins. The protein is Rho GTPase-activating protein 10 (Arhgap10) of Mus musculus (Mouse).